Here is a 492-residue protein sequence, read N- to C-terminus: Histone-lysine N-methyltransferase PRDM7 (492 aa).

The disordered stretch occupies residues Met-1 to Pro-22. The region spanning Met-23 to Asp-86 is the KRAB-related domain. A disordered region spans residues Glu-111–Lys-179. Residues Gly-135–Lys-150 show a composition bias toward polar residues. The segment covering Leu-167–Lys-179 has biased composition (basic and acidic residues). The SET domain maps to Pro-244 to Gly-358.

Its subcellular location is the nucleus. It is found in the chromosome. It carries out the reaction N(6),N(6)-dimethyl-L-lysyl(4)-[histone H3] + S-adenosyl-L-methionine = N(6),N(6),N(6)-trimethyl-L-lysyl(4)-[histone H3] + S-adenosyl-L-homocysteine + H(+). Histone methyltransferase that selectively methylates 'Lys-4' of dimethylated histone H3 (H3K4me2) to produce trimethylated 'Lys-4' histone H3 (H3K4me3). May play a role in epigenetic regulation of gene expression by defining an active chromatin state. In Homo sapiens (Human), this protein is Histone-lysine N-methyltransferase PRDM7.